Reading from the N-terminus, the 598-residue chain is Peptide transporter CstA (598 aa).

A run of 16 helical transmembrane segments spans residues 6–26 (IVIASMCILAIAYRLYGTFMM), 62–82 (FAAIAAAGPLVGPILAAQFGY), 86–106 (LLWLLIGAVIGGAVHDIVVLF), 132–152 (TGLSMLFIITITMAGLSMVVL), 159–179 (PWGTFAVGITIPIAMGVGLFY), 191–211 (VGFLFLMAGVFIGPWVQTTAL), 222–242 (LAIALPVYAFFAAALPVWLLL), 254–274 (IGVFIALIVGVFVVNPSIPFP), 291–311 (VWPFISITIACGAISGFHAFV), 328–348 (PVAFGAMLVECLVGIMALIAA), 391–411 (TGGAVTLAVGMTYIFTGMPFF), 414–434 (LASYFFQFVIMFEAVFILTAI), 461–481 (WIPGSVFASALACLMWGYLLY), 488–508 (IWALFGVSNQLMASVGLIIGA), 521–541 (ILTCLIPLAYLYVTVNYAGYW), and 557–577 (VLNGVLSIIMLVLGFIIIVAA).

Belongs to the peptide transporter carbon starvation (CstA) (TC 2.A.114) family.

It is found in the cell membrane. Functionally, involved in peptide utilization. This Bacillus subtilis (strain 168) protein is Peptide transporter CstA (cstA).